We begin with the raw amino-acid sequence, 379 residues long: Guanine nucleotide-binding protein G(s) subunit alpha (379 aa).

Positions 1-25 are disordered; it reads MGCLGNSKTEDQRNEEKVQRETNKK. A lipid anchor (N-palmitoyl glycine) is attached at G2. A lipid anchor (S-palmitoyl cysteine) is attached at C3. Over residues 8 to 25 the composition is skewed to basic and acidic residues; that stretch reads KTEDQRNEEKVQRETNKK. Positions 39–379 constitute a G-alpha domain; the sequence is ATHRLLLLGA…RMHLRQYELL (341 aa). A G1 motif region spans residues 42-55; the sequence is RLLLLGAGESGKSS. GTP-binding positions include 47–55, 182–189, 208–212, 277–280, and A351; these read GAGESGKSS, LLRCRVLT, DVGGQ, and NKQD. S54 and T189 together coordinate Mg(2+). The G2 motif stretch occupies residues 181–189; sequence DLLRCRVLT. The interval 204 to 213 is G3 motif; it reads FHMFDVGGQR. The interval 273–280 is G4 motif; it reads ILFLNKQD. The G5 motif stretch occupies residues 349–354; that stretch reads TCAVDT.

The protein belongs to the G-alpha family. G(s) subfamily. Heterotrimeric G proteins are composed of 3 units; alpha, beta and gamma. The alpha chain contains the guanine nucleotide binding site.

The protein localises to the cell membrane. Its function is as follows. Guanine nucleotide-binding proteins (G proteins) function as transducers in numerous signaling pathways controlled by G protein-coupled receptors (GPCRs). Signaling involves the activation of adenylyl cyclases, resulting in increased levels of the signaling molecule cAMP. GNAS functions downstream of several GPCRs, including beta-adrenergic receptors. Stimulates the Ras signaling pathway. The polypeptide is Guanine nucleotide-binding protein G(s) subunit alpha (gnas) (Xenopus laevis (African clawed frog)).